We begin with the raw amino-acid sequence, 484 residues long: Putative cysteine ligase BshC (484 aa).

Positions 372-435 (RAFRDRVEGL…AARDEVLARH (64 aa)) form a coiled coil.

This sequence belongs to the BshC family.

This is Putative cysteine ligase BshC from Thermus thermophilus (strain ATCC BAA-163 / DSM 7039 / HB27).